A 437-amino-acid chain; its full sequence is Ribulose bisphosphate carboxylase-like protein (437 aa).

Residue Lys-176 is the Proton acceptor of the active site. Mg(2+) contacts are provided by Lys-202, Asp-204, and Glu-205. Lys-202 bears the N6-carboxylysine mark. Residue His-293 is the Proton acceptor of the active site.

Belongs to the RuBisCO large chain family. Type IV subfamily. Homodimer. It depends on Mg(2+) as a cofactor.

In terms of biological role, may be involved in sulfur metabolism and oxidative stress response. Does not show RuBisCO activity. This chain is Ribulose bisphosphate carboxylase-like protein, found in Archaeoglobus fulgidus (strain ATCC 49558 / DSM 4304 / JCM 9628 / NBRC 100126 / VC-16).